A 120-amino-acid polypeptide reads, in one-letter code: Large ribosomal subunit protein uL18c (120 aa).

The protein belongs to the universal ribosomal protein uL18 family. Part of the 50S ribosomal subunit; contacts the 5S rRNA.

It localises to the plastid. Its subcellular location is the chloroplast. Functionally, binds 5S rRNA, forms part of the central protuberance of the 50S subunit. This chain is Large ribosomal subunit protein uL18c (rpl18), found in Porphyra purpurea (Red seaweed).